The chain runs to 230 residues: Heptaprenylglyceryl phosphate synthase (230 aa).

A sn-glycerol 1-phosphate-binding site is contributed by Lys12. Residues Asp14 and Thr40 each contribute to the Mg(2+) site. Sn-glycerol 1-phosphate is bound by residues 159–164 (YIEYSG), Gly189, and 209–210 (GD).

Belongs to the GGGP/HepGP synthase family. Group I subfamily. In terms of assembly, homodimer. The cofactor is Mg(2+).

The enzyme catalyses sn-glycerol 1-phosphate + all-trans-heptaprenyl diphosphate = 3-heptaprenyl-sn-glycero-1-phosphate + diphosphate. It participates in membrane lipid metabolism; glycerophospholipid metabolism. Its function is as follows. Prenyltransferase that catalyzes in vivo the transfer of the heptaprenyl moiety of heptaprenyl pyrophosphate (HepPP; 35 carbon atoms) to the C3 hydroxyl of sn-glycerol-1-phosphate (G1P), producing heptaprenylglyceryl phosphate (HepGP). This reaction is an ether-bond-formation step in the biosynthesis of archaea-type G1P-based membrane lipids found in Bacillales. The sequence is that of Heptaprenylglyceryl phosphate synthase from Staphylococcus aureus (strain JH1).